A 1913-amino-acid chain; its full sequence is Protein TIC 214 (1913 aa).

The next 5 membrane-spanning stretches (helical) occupy residues 18 to 38 (IINSVVVVGLYYGFLTTFSIG), 64 to 84 (FITGQLMMFISIYYAPLHLAL), 124 to 144 (LSIQCVFLTNLIFQLFNHLML), 172 to 192 (VGWLIGHILFMKWVGLVVSWI), and 214 to 234 (LKSAIAQILSIIFFIACVNYL). Disordered regions lie at residues 245–330 (KLNE…ETEE), 707–734 (YTDKNQNRDQDPNPNTDNTTTENDNSDT), and 1605–1652 (EKED…RKKK). Over residues 260 to 289 (KESQKSKESEEERDVEKETTSETKETKQEQ) the composition is skewed to basic and acidic residues. A compositionally biased stretch (acidic residues) spans 303 to 314 (EKEDPDKIDETE). A compositionally biased stretch (basic and acidic residues) spans 315–330 (EIRVNGKEKKKDETEE). Low complexity predominate over residues 718–729 (PNPNTDNTTTEN).

This sequence belongs to the TIC214 family. As to quaternary structure, part of the Tic complex.

It is found in the plastid. The protein resides in the chloroplast inner membrane. Its function is as follows. Involved in protein precursor import into chloroplasts. May be part of an intermediate translocation complex acting as a protein-conducting channel at the inner envelope. The sequence is that of Protein TIC 214 from Acorus calamus var. americanus (American sweet flag).